We begin with the raw amino-acid sequence, 513 residues long: Cytochrome P450 monooxygenase sthF (513 aa).

2 helical membrane-spanning segments follow: residues 13–33 (FPSL…YIFI) and 212–232 (MLHP…IILL). Position 452 (Cys-452) interacts with heme.

This sequence belongs to the cytochrome P450 family. Heme serves as cofactor.

The protein localises to the membrane. It carries out the reaction dehydroprobetaenone I + NADPH + O2 + H(+) = epoxybetaenone + NADP(+) + H2O. The enzyme catalyses dehydroprobetaenone I + 3 NADPH + 3 O2 + 3 H(+) = betaenone C + 3 NADP(+) + 3 H2O. The catalysed reaction is probetaenone I + 3 NADPH + 3 O2 + 3 H(+) = betaenone B + 3 NADP(+) + 3 H2O. The protein operates within mycotoxin biosynthesis. Cytochrome P450 monooxygenase; part of the gene cluster that mediates the biosynthesis of the phytotoxin stemphyloxin II. The first step of the pathway is the synthesis of dehydroprobetaenone I by the polyketide synthase sthA and the enoyl reductase sthE via condensation of one acetyl-CoA starter unit with 7 malonyl-CoA units and 5 methylations. The C-terminal reductase (R) domain of sthA catalyzes the reductive release of the polyketide chain. Because sthA lacks a designated enoylreductase (ER) domain, the required activity is provided the enoyl reductase sthE. The short-chain dehydrogenase/reductase sthC then catalyzes reduction of dehydroprobetaenone I to probetaenone I. The cytochrome P450 monooxygenase sthF catalyzes successive epoxidation, oxidation (resulting from epoxide opening) and hydroxylation to install a tertiary alcohol in the decaline ring to yield betaenone C from dehydroprobetaenone I and betaenone B from probetaenone I. The FAD-linked oxidoreductase sthB is responsible for the conversion of betaenone C to betaenone A via an intramolecular aldol reaction between C-1 and C-17 to form the bridged tricyclic system in betaenone A. Finally, the cytochrome P450 monooxygenase sthD catalyzes the hydroxylation of C-15 to afford the final metabolite stemphyloxin II. This chain is Cytochrome P450 monooxygenase sthF, found in Phaeosphaeria nodorum (strain SN15 / ATCC MYA-4574 / FGSC 10173) (Glume blotch fungus).